The following is a 946-amino-acid chain: Leucine--tRNA ligase (946 aa).

The 'HIGH' region motif lies at 43 to 53 (PYPNGTIHIGH). Positions 638–642 (KMSKS) match the 'KMSKS' region motif. Position 641 (lysine 641) interacts with ATP.

This sequence belongs to the class-I aminoacyl-tRNA synthetase family.

The protein resides in the cytoplasm. The catalysed reaction is tRNA(Leu) + L-leucine + ATP = L-leucyl-tRNA(Leu) + AMP + diphosphate. This is Leucine--tRNA ligase from Pyrobaculum calidifontis (strain DSM 21063 / JCM 11548 / VA1).